The chain runs to 129 residues: Small ribosomal subunit protein uS11 (129 aa).

It belongs to the universal ribosomal protein uS11 family. Part of the 30S ribosomal subunit. Interacts with proteins S7 and S18. Binds to IF-3.

Its function is as follows. Located on the platform of the 30S subunit, it bridges several disparate RNA helices of the 16S rRNA. Forms part of the Shine-Dalgarno cleft in the 70S ribosome. In Yersinia enterocolitica serotype O:8 / biotype 1B (strain NCTC 13174 / 8081), this protein is Small ribosomal subunit protein uS11.